We begin with the raw amino-acid sequence, 1047 residues long: Atrial natriuretic peptide receptor 2 (1047 aa).

The signal sequence occupies residues 1–16 (MALPSLLLVVAALAGG). The Extracellular portion of the chain corresponds to 17–458 (VRPPGARNLT…DKTPLSTLAI (442 aa)). 2 N-linked (GlcNAc...) asparagine glycosylation sites follow: Asn24 and Asn35. The cysteines at positions 75 and 101 are disulfide-linked. Asn161, Asn195, Asn244, Asn277, and Asn349 each carry an N-linked (GlcNAc...) asparagine glycan. A helical transmembrane segment spans residues 459–478 (VALGTGITFIMFGVSSFLIF). Residues 479–1047 (RKLMLEKELA…GERKGPAGLL (569 aa)) are Cytoplasmic-facing. At Ser513 the chain carries Phosphoserine. Residues 513-786 (SRLTLSLRGS…PDFGQIKGFI (274 aa)) form the Protein kinase domain. Position 516 is a phosphothreonine (Thr516). 4 positions are modified to phosphoserine: Ser518, Ser522, Ser523, and Ser526. Position 529 is a phosphothreonine (Thr529). Residues 861–991 (TIYFSDIVGF…DTVNTASRME (131 aa)) form the Guanylate cyclase domain.

This sequence belongs to the adenylyl cyclase class-4/guanylyl cyclase family. Phosphorylated. Phosphorylation of the protein kinase-like domain is required for full activation by CNP. In terms of processing, glycosylated.

The protein localises to the cell membrane. It carries out the reaction GTP = 3',5'-cyclic GMP + diphosphate. Its function is as follows. Receptor for the C-type natriuretic peptide NPPC/CNP hormone. Has guanylate cyclase activity upon binding of its ligand. May play a role in the regulation of skeletal growth. This Bos taurus (Bovine) protein is Atrial natriuretic peptide receptor 2 (NPR2).